The primary structure comprises 396 residues: Activity-regulated cytoskeleton-associated protein (396 aa).

Residues 54 to 78 (SKQVERELKGLHRSVGKLENNLDGY) are a coiled coil. The interval 89–100 (KSIKACLCRCQE) is interaction with SH3GL1 or SH3GL3. The segment at 177–207 (PPAAGELPEQESVEAQQYQSWGPGEDGQPSP) is disordered. The interaction with DNM2 stretch occupies residues 195-214 (QSWGPGEDGQPSPGVDTQIF). Ser-260 carries the phosphoserine; by CaMK2 modification. Residues Lys-268 and Lys-269 each participate in a glycyl lysine isopeptide (Lys-Gly) (interchain with G-Cter in ubiquitin) cross-link. Position 278 is a phosphothreonine (Thr-278). Residues 356 to 396 (QDGLEQAAEPSGTPLPTEDETEALTPALTSESVASDRTQPE) form a disordered region. Residues 382–396 (ALTSESVASDRTQPE) show a composition bias toward polar residues.

It belongs to the ARC/ARG3.1 family. As to quaternary structure, homooligomer; homooligomerizes into virion-like capsids. Interacts with SH3GL1/endophilin-2, SH3GL3/endophilin-3 and DNM2/DYN2. Interacts with CAMK2B (in the kinase inactive state); leading to target ARC to inactive synapses. Interacts with PSEN1. Interacts with GRIN2A and GRIN2B; inhibiting homooligomerization. In terms of processing, ubiquitinated by UBE3A, leading to its degradation by the proteasome, thereby promoting AMPA receptors (AMPARs) expression at synapses. Ubiquitinated by RNF216 at Lys-268 and Lys-269 limiting ARC protein levels induced by synaptic activity and thus regulating ARC-dependent forms of synaptic plasticity. Post-translationally, palmitoylation anchors the protein into the membrane by allowing direct insertion into the hydrophobic core of the lipid bilayer. Phosphorylation at Ser-260 by CaMK2 prevents homooligomerization into virion-like capsids by disrupting an interaction surface essential for high-order oligomerization. Phosphorylation by CaMK2 inhibits synaptic activity. Expressed in brain and testis. In primary visual cortex, detected in all cortical layers with the exception of layer 5: present at highest level in layers 2/3 and 4, the predominant sites of ocular dominance plasticity (at protein level). Also expressed in skin-migratory dendritic cells.

Its subcellular location is the extracellular vesicle membrane. It is found in the postsynaptic cell membrane. The protein localises to the synapse. It localises to the postsynaptic density. The protein resides in the early endosome membrane. Its subcellular location is the cell projection. It is found in the dendrite. The protein localises to the cytoplasm. It localises to the cytoskeleton. The protein resides in the cell cortex. Its subcellular location is the dendritic spine. It is found in the cytoplasmic vesicle. The protein localises to the secretory vesicle. It localises to the acrosome. The protein resides in the clathrin-coated vesicle membrane. Its function is as follows. Master regulator of synaptic plasticity that self-assembles into virion-like capsids that encapsulate RNAs and mediate intercellular RNA transfer in the nervous system. ARC protein is released from neurons in extracellular vesicles that mediate the transfer of ARC mRNA into new target cells, where ARC mRNA can undergo activity-dependent translation. ARC capsids are endocytosed and are able to transfer ARC mRNA into the cytoplasm of neurons. Acts as a key regulator of synaptic plasticity: required for protein synthesis-dependent forms of long-term potentiation (LTP) and depression (LTD) and for the formation of long-term memory. Regulates synaptic plasticity by promoting endocytosis of AMPA receptors (AMPARs) in response to synaptic activity: this endocytic pathway maintains levels of surface AMPARs in response to chronic changes in neuronal activity through synaptic scaling, thereby contributing to neuronal homeostasis. Acts as a postsynaptic mediator of activity-dependent synapse elimination in the developing cerebellum by mediating elimination of surplus climbing fiber synapses. Accumulates at weaker synapses, probably to prevent their undesired enhancement. This suggests that ARC-containing virion-like capsids may be required to eliminate synaptic material. Required to transduce experience into long-lasting changes in visual cortex plasticity and for long-term memory. Involved in postsynaptic trafficking and processing of amyloid-beta A4 (APP) via interaction with PSEN1. In addition to its role in synapses, also involved in the regulation of the immune system: specifically expressed in skin-migratory dendritic cells and regulates fast dendritic cell migration, thereby regulating T-cell activation. The chain is Activity-regulated cytoskeleton-associated protein from Mus musculus (Mouse).